The following is a 426-amino-acid chain: Histidine--tRNA ligase (426 aa).

Belongs to the class-II aminoacyl-tRNA synthetase family.

It localises to the cytoplasm. It carries out the reaction tRNA(His) + L-histidine + ATP = L-histidyl-tRNA(His) + AMP + diphosphate + H(+). The sequence is that of Histidine--tRNA ligase from Sulfurisphaera tokodaii (strain DSM 16993 / JCM 10545 / NBRC 100140 / 7) (Sulfolobus tokodaii).